Consider the following 473-residue polypeptide: Siroheme synthase (473 aa).

Residues 1-203 are precorrin-2 dehydrogenase /sirohydrochlorin ferrochelatase; the sequence is MNYLPIFIDL…GNKEQAINVL (203 aa). NAD(+) is bound by residues 22–23 and 43–44; these read EV and KE. Position 128 is a phosphoserine (serine 128). The uroporphyrinogen-III C-methyltransferase stretch occupies residues 215–473; it reads GEIILVGAGP…KNKFSTLTFI (259 aa). Proline 224 provides a ligand contact to S-adenosyl-L-methionine. The Proton acceptor role is filled by aspartate 247. Residue lysine 269 is the Proton donor of the active site. Residues 300–302, isoleucine 305, methionine 382, and glycine 411 contribute to the S-adenosyl-L-methionine site; that span reads GGD.

It in the N-terminal section; belongs to the precorrin-2 dehydrogenase / sirohydrochlorin ferrochelatase family. In the C-terminal section; belongs to the precorrin methyltransferase family.

It catalyses the reaction uroporphyrinogen III + 2 S-adenosyl-L-methionine = precorrin-2 + 2 S-adenosyl-L-homocysteine + H(+). The catalysed reaction is precorrin-2 + NAD(+) = sirohydrochlorin + NADH + 2 H(+). The enzyme catalyses siroheme + 2 H(+) = sirohydrochlorin + Fe(2+). Its pathway is cofactor biosynthesis; adenosylcobalamin biosynthesis; precorrin-2 from uroporphyrinogen III: step 1/1. It participates in cofactor biosynthesis; adenosylcobalamin biosynthesis; sirohydrochlorin from precorrin-2: step 1/1. It functions in the pathway porphyrin-containing compound metabolism; siroheme biosynthesis; precorrin-2 from uroporphyrinogen III: step 1/1. The protein operates within porphyrin-containing compound metabolism; siroheme biosynthesis; siroheme from sirohydrochlorin: step 1/1. Its pathway is porphyrin-containing compound metabolism; siroheme biosynthesis; sirohydrochlorin from precorrin-2: step 1/1. Multifunctional enzyme that catalyzes the SAM-dependent methylations of uroporphyrinogen III at position C-2 and C-7 to form precorrin-2 via precorrin-1. Then it catalyzes the NAD-dependent ring dehydrogenation of precorrin-2 to yield sirohydrochlorin. Finally, it catalyzes the ferrochelation of sirohydrochlorin to yield siroheme. This Buchnera aphidicola subsp. Acyrthosiphon pisum (strain APS) (Acyrthosiphon pisum symbiotic bacterium) protein is Siroheme synthase.